A 183-amino-acid chain; its full sequence is Outer membrane protein H.8 (183 aa).

An N-terminal signal peptide occupies residues 1 to 17 (MKAYLALISAAVIGLAA). The N-palmitoyl cysteine moiety is linked to residue Cys18. The S-diacylglycerol cysteine moiety is linked to residue Cys18. A disordered region spans residues 27–51 (AEATPAAEAPASEAPAAEAAPADAA). Residues 57–183 (GNCAATVESN…LMNGKVTLVD (127 aa)) enclose the Plastocyanin-like domain. Cu cation contacts are provided by His102, Cys166, His171, and Met175.

It depends on Cu cation as a cofactor.

It localises to the cell outer membrane. In Neisseria meningitidis serogroup B (strain ATCC BAA-335 / MC58), this protein is Outer membrane protein H.8.